Consider the following 432-residue polypeptide: Glutamate-1-semialdehyde 2,1-aminomutase 1 (432 aa).

N6-(pyridoxal phosphate)lysine is present on K268.

The protein belongs to the class-III pyridoxal-phosphate-dependent aminotransferase family. HemL subfamily. In terms of assembly, homodimer. The cofactor is pyridoxal 5'-phosphate.

The protein resides in the cytoplasm. It catalyses the reaction (S)-4-amino-5-oxopentanoate = 5-aminolevulinate. It functions in the pathway porphyrin-containing compound metabolism; protoporphyrin-IX biosynthesis; 5-aminolevulinate from L-glutamyl-tRNA(Glu): step 2/2. The protein is Glutamate-1-semialdehyde 2,1-aminomutase 1 of Bacillus licheniformis (strain ATCC 14580 / DSM 13 / JCM 2505 / CCUG 7422 / NBRC 12200 / NCIMB 9375 / NCTC 10341 / NRRL NRS-1264 / Gibson 46).